A 381-amino-acid chain; its full sequence is Beta-lactamase CMY-2 (381 aa).

A signal peptide spans 1 to 20; that stretch reads MMKKSLCCALLLTASFSTFA. Ser-84 functions as the Acyl-ester intermediate in the catalytic mechanism. A beta-lactam-binding residues include Ser-84, Gln-140, Tyr-170, and Asn-172.

The protein belongs to the class-C beta-lactamase family.

The enzyme catalyses a beta-lactam + H2O = a substituted beta-amino acid. With respect to regulation, inhibited by the beta-lactamase-blocking agents sulbactam, tazobactam, avibactam and 3-aminophenylboronic acid (APB). Its function is as follows. Class C beta-lactamase which confers resistance to penicillins and cephalosporins. Has nitrocefin-, cefoxitin- and cefoperazone-hydrolyzing activities. This Klebsiella pneumoniae protein is Beta-lactamase CMY-2.